A 972-amino-acid chain; its full sequence is MERMNWLSRLASRGPGHRIPQGANLQTPVMADPETCLMVFKNHWSQVVRILERQGPRAAPGGADDLSAVRNHTYQMLTLLAEDRAVPSAPTGPGPLLEFAPHEDLLTRVLTWQLQWGELGDGVEERRAEQLKLFEMLVSEARQPLLQHGPVREALLTLLDACGRPVPSSPALDEGLVLLLSQLCVCVAQEPSLLEFFLQPPPEPGAAPRLLLFSRLVPFVHREGTLGQQARDALPLLMALSAGSPTVGRYIADHSYFCPVLATGLSALYSSLPRRIEVPGDDWHCLRREDWLGVPALALFMSSLEFCNAVIQVAHPLVQKQLVDYIHNGFLVPVMGPALHKTSVEEMIASTAYLELFLRSISEPALLRTFLRFLLLHRHDTHTILDTLVARIGSNSRLCMVSLSLFRTLLNLSCEDVLLQLVLRYLVPCNHVMLSQKPAVRDVDLYGRAADKFLSLIPRCCRHHAPSPPRPEHASWARGPGSPSVDSSSVMTVPRPSTPSRLALFLRQQSLSGSESPGPAPCSPGLSASPASSPGRRPTPAEEAGELEDNYLEYQREARRGVDHCVRACRTWSAPYDGERPSPEPSPFGSRTKKRSLLPEEDRNNVGEGEEEELGSRGLAGGAGEGPGHLPPPQLNGVPGSWPEGAKRVRLVPKEGVGELLEGISEGMAGLEGFGQELRELEVALSNGGTGSESPLEPPLPLEEEEAYESFTCPPEPPGPFLNSPLRTPNQLPSQPFTGPFMAVLFAKLENMLQNSVYVNFLLTGLVAQLACHPQPLLRSFLLNTNMVFQPSVKSLLQVLGSVKNKIENFAASQEDFPALLSKAKKYLIARGKLDWAEGPAAGPAPRRSDPLVKSRRPSLGELLLRHARSPTRARQAAQLVLQPGRDGAGLGLSGGSPGASTPVLPTRGGAPERQGEALRVKNAVYCAVIFPEFLKELAAISQAHAVTSPFLLETSEEGSGPLISGCGPLNP.

Disordered regions lie at residues 465–496, 510–547, 573–642, and 710–733; these read APSPPRPEHASWARGPGSPSVDSSSVMTVPRP, SLSGSESPGPAPCSPGLSASPASSPGRRPTPAEEAGEL, SAPY…PGSW, and SFTCPPEPPGPFLNSPLRTPNQLP. Phosphoserine is present on Ser-467. Residues 479–490 are compositionally biased toward low complexity; that stretch reads GPGSPSVDSSSV. Ser-510, Ser-523, Ser-529, and Ser-533 each carry phosphoserine. Over residues 523 to 535 the composition is skewed to low complexity; sequence SPGLSASPASSPG. The span at 618–627 shows a compositional bias: gly residues; sequence GLAGGAGEGP. 2 positions are modified to phosphoserine: Ser-859 and Ser-897.

It belongs to the FHIP family. Component of the FTS/Hook/FHIP complex (FHF complex), composed of AKTIP/FTS, FHIP1B, and one or more members of the Hook family of proteins HOOK1, HOOK2, and HOOK3. The FHF complex associates with the homotypic vesicular sorting complex (the HOPS complex).

In terms of biological role, component of the FTS/Hook/FHIP complex (FHF complex). The FHF complex may function to promote vesicle trafficking and/or fusion via the homotypic vesicular protein sorting complex (the HOPS complex). FHF complex promotes the distribution of AP-4 complex to the perinuclear area of the cell. In Pongo abelii (Sumatran orangutan), this protein is FHF complex subunit HOOK-interacting protein 1B (FHIP1B).